The chain runs to 95 residues: Co-chaperonin GroES (95 aa).

This sequence belongs to the GroES chaperonin family. As to quaternary structure, heptamer of 7 subunits arranged in a ring. Interacts with the chaperonin GroEL.

It is found in the cytoplasm. Together with the chaperonin GroEL, plays an essential role in assisting protein folding. The GroEL-GroES system forms a nano-cage that allows encapsulation of the non-native substrate proteins and provides a physical environment optimized to promote and accelerate protein folding. GroES binds to the apical surface of the GroEL ring, thereby capping the opening of the GroEL channel. The chain is Co-chaperonin GroES from Staphylococcus haemolyticus (strain JCSC1435).